The following is a 388-amino-acid chain: Succinate--CoA ligase [ADP-forming] subunit beta (388 aa).

The 236-residue stretch at 9–244 folds into the ATP-grasp domain; sequence KDLLVSYDIA…PSQENVRDVL (236 aa). ATP contacts are provided by residues Lys46, 53 to 55, Val102, and Glu107; that span reads GRG. Mg(2+) is bound by residues Asn199 and Asp213. Residues Asn264 and 321-323 each bind substrate; that span reads GIM.

This sequence belongs to the succinate/malate CoA ligase beta subunit family. In terms of assembly, heterotetramer of two alpha and two beta subunits. Requires Mg(2+) as cofactor.

It catalyses the reaction succinate + ATP + CoA = succinyl-CoA + ADP + phosphate. It carries out the reaction GTP + succinate + CoA = succinyl-CoA + GDP + phosphate. The protein operates within carbohydrate metabolism; tricarboxylic acid cycle; succinate from succinyl-CoA (ligase route): step 1/1. Its function is as follows. Succinyl-CoA synthetase functions in the citric acid cycle (TCA), coupling the hydrolysis of succinyl-CoA to the synthesis of either ATP or GTP and thus represents the only step of substrate-level phosphorylation in the TCA. The beta subunit provides nucleotide specificity of the enzyme and binds the substrate succinate, while the binding sites for coenzyme A and phosphate are found in the alpha subunit. The polypeptide is Succinate--CoA ligase [ADP-forming] subunit beta (Chlamydia caviae (strain ATCC VR-813 / DSM 19441 / 03DC25 / GPIC) (Chlamydophila caviae)).